The chain runs to 168 residues: Phosphopantetheine adenylyltransferase (168 aa).

T13 contributes to the substrate binding site. Residues 13-14 (TF) and H21 contribute to the ATP site. K45, L78, and R92 together coordinate substrate. ATP-binding positions include 93-95 (GLR), E103, and 128-134 (TQFISSS).

This sequence belongs to the bacterial CoaD family. Homohexamer. Mg(2+) serves as cofactor.

The protein resides in the cytoplasm. It carries out the reaction (R)-4'-phosphopantetheine + ATP + H(+) = 3'-dephospho-CoA + diphosphate. The protein operates within cofactor biosynthesis; coenzyme A biosynthesis; CoA from (R)-pantothenate: step 4/5. Reversibly transfers an adenylyl group from ATP to 4'-phosphopantetheine, yielding dephospho-CoA (dPCoA) and pyrophosphate. The chain is Phosphopantetheine adenylyltransferase from Wolbachia pipientis subsp. Culex pipiens (strain wPip).